Consider the following 474-residue polypeptide: Protein nucleotidyltransferase YdiU (474 aa).

The ATP site is built by Gly89, Gly91, Arg92, Lys112, Asp124, Gly125, Arg175, and Arg182. The active-site Proton acceptor is the Asp256. Asn257 and Asp266 together coordinate Mg(2+). Asp266 contributes to the ATP binding site.

The protein belongs to the SELO family. The cofactor is Mg(2+). Requires Mn(2+) as cofactor.

It carries out the reaction L-seryl-[protein] + ATP = 3-O-(5'-adenylyl)-L-seryl-[protein] + diphosphate. It catalyses the reaction L-threonyl-[protein] + ATP = 3-O-(5'-adenylyl)-L-threonyl-[protein] + diphosphate. The enzyme catalyses L-tyrosyl-[protein] + ATP = O-(5'-adenylyl)-L-tyrosyl-[protein] + diphosphate. The catalysed reaction is L-histidyl-[protein] + UTP = N(tele)-(5'-uridylyl)-L-histidyl-[protein] + diphosphate. It carries out the reaction L-seryl-[protein] + UTP = O-(5'-uridylyl)-L-seryl-[protein] + diphosphate. It catalyses the reaction L-tyrosyl-[protein] + UTP = O-(5'-uridylyl)-L-tyrosyl-[protein] + diphosphate. Functionally, nucleotidyltransferase involved in the post-translational modification of proteins. It can catalyze the addition of adenosine monophosphate (AMP) or uridine monophosphate (UMP) to a protein, resulting in modifications known as AMPylation and UMPylation. This chain is Protein nucleotidyltransferase YdiU, found in Corynebacterium glutamicum (strain R).